A 288-amino-acid chain; its full sequence is Probable prolyl 4-hydroxylase 6 (288 aa).

At 1–4 (MDSQ) the chain is on the cytoplasmic side. A helical; Signal-anchor for type II membrane protein membrane pass occupies residues 5–27 (YFLAFSLSLLLIFSQISSFSFSV). Topologically, residues 28 to 288 (DPTRITQLSW…GFCRKSCKAC (261 aa)) are lumenal. The Fe2OG dioxygenase domain maps to 116 to 238 (NGEALQILHY…KWSATRWIHV (123 aa)). 2 residues coordinate Fe cation: histidine 134 and aspartate 136. 2 N-linked (GlcNAc...) asparagine glycosylation sites follow: asparagine 160 and asparagine 210. Histidine 219 is a Fe cation binding site. Lysine 229 provides a ligand contact to 2-oxoglutarate. A ShKT domain is found at 248–288 (CVDDHESCQEWADAGECEKNPMYMVGSETSLGFCRKSCKAC). 3 disulfides stabilise this stretch: cysteine 248–cysteine 288, cysteine 255–cysteine 281, and cysteine 264–cysteine 285.

Belongs to the P4HA family. Fe(2+) serves as cofactor. The cofactor is L-ascorbate.

The protein localises to the endoplasmic reticulum membrane. The catalysed reaction is L-prolyl-[collagen] + 2-oxoglutarate + O2 = trans-4-hydroxy-L-prolyl-[collagen] + succinate + CO2. In terms of biological role, catalyzes the post-translational formation of 4-hydroxyproline in -Xaa-Pro-Gly- sequences in proline-rich peptide sequences of plant glycoproteins and other proteins. Hydroxyprolines are important constituent of many plant cell wall glycoproteins such as extensins, hydroxyproline-rich glycoproteins, lectins and arabinogalactan proteins. The chain is Probable prolyl 4-hydroxylase 6 from Arabidopsis thaliana (Mouse-ear cress).